The following is a 64-amino-acid chain: U-myrmeciitoxin(01)-Mg4b (64 aa).

The first 25 residues, 1 to 25 (MGKIFFFVLMIAIIGSTFLIEEALG), serve as a signal peptide directing secretion.

This sequence belongs to the ant myrmeciitoxin-01 family. Homodimer; disulfide-linked. In terms of processing, contains 2 intrachain disulfide bonds (per chain) and 1 interchain disulfide bond. As to expression, expressed by the venom gland.

It is found in the secreted. Functionally, may have antimicrobial properties, like most ant linear peptides. This chain is U-myrmeciitoxin(01)-Mg4b, found in Myrmecia gulosa (Red bulldog ant).